The sequence spans 275 residues: MSSALAPVGIFDSGVGGLTVARAIIDQLPDEHIIYVGDTGHGPYGPLSIPEVRAHALAIGDDLVGRGVKALVIACNTASAACLRDARERYEVPVVEVILPAVRRAVATTRNGRIGVIGTQATINSHAYQDAFAAARDTEITAVACPRFVDFVERGVTSGRQVLGLAEGYLEPLQRAQVDTLVLGCTHYPLLSGLIQLAMGDNVTLVSSAEETAKEVLRVLAERDLLHPHPDDPRAAGPSRVFEATGDPEAFTRLAARFLGPAVSGVRPVHHVRID.

Substrate-binding positions include 12–13 (DS) and 44–45 (YG). The Proton donor/acceptor role is filled by Cys-75. Substrate is bound at residue 76–77 (NT). Residue Cys-185 is the Proton donor/acceptor of the active site. 186-187 (TH) is a substrate binding site.

It belongs to the aspartate/glutamate racemases family.

The enzyme catalyses L-glutamate = D-glutamate. It functions in the pathway cell wall biogenesis; peptidoglycan biosynthesis. Functionally, provides the (R)-glutamate required for cell wall biosynthesis. This Mycolicibacterium paratuberculosis (strain ATCC BAA-968 / K-10) (Mycobacterium paratuberculosis) protein is Glutamate racemase.